We begin with the raw amino-acid sequence, 142 residues long: HTH-type transcriptional regulator MntR (142 aa).

An HTH dtxR-type domain is found at 1–63 (MPTPSMEDYI…YEKYRGLVLT (63 aa)). Positions 8, 11, 77, 99, 102, and 103 each coordinate Mn(2+).

The protein belongs to the DtxR/MntR family. Homodimer.

The protein localises to the cytoplasm. DNA binding is strongly activated by Mn(2+). In terms of biological role, central regulator of manganese homeostasis. The sequence is that of HTH-type transcriptional regulator MntR from Bacillus cereus (strain G9842).